The following is a 101-amino-acid chain: MKTKLRVGDKVKILCGKDRGKVGEIASIDRKKFKVTVKSCNMIKKVIKARTPQEKGKIIDKEAPMDISNVMLFSNGVISRVGIKFENNEKKRYLKKSGENV.

Belongs to the universal ribosomal protein uL24 family. In terms of assembly, part of the 50S ribosomal subunit.

In terms of biological role, one of two assembly initiator proteins, it binds directly to the 5'-end of the 23S rRNA, where it nucleates assembly of the 50S subunit. One of the proteins that surrounds the polypeptide exit tunnel on the outside of the subunit. The sequence is that of Large ribosomal subunit protein uL24 from Borrelia recurrentis (strain A1).